Here is a 348-residue protein sequence, read N- to C-terminus: Dihydroorotase (348 aa).

Residues histidine 17 and histidine 19 each contribute to the Zn(2+) site. Substrate is bound by residues 19-21 (HLR) and asparagine 45. Zn(2+)-binding residues include lysine 103, histidine 140, and histidine 178. Lysine 103 is modified (N6-carboxylysine). Position 140 (histidine 140) interacts with substrate. Leucine 223 serves as a coordination point for substrate. Aspartate 251 is a Zn(2+) binding site. Residue aspartate 251 is part of the active site. The substrate site is built by histidine 255 and alanine 267.

It belongs to the metallo-dependent hydrolases superfamily. DHOase family. Class II DHOase subfamily. Homodimer. The cofactor is Zn(2+).

The catalysed reaction is (S)-dihydroorotate + H2O = N-carbamoyl-L-aspartate + H(+). It participates in pyrimidine metabolism; UMP biosynthesis via de novo pathway; (S)-dihydroorotate from bicarbonate: step 3/3. Functionally, catalyzes the reversible cyclization of carbamoyl aspartate to dihydroorotate. In Shigella boydii serotype 4 (strain Sb227), this protein is Dihydroorotase.